A 205-amino-acid polypeptide reads, in one-letter code: High frequency lysogenization protein HflD homolog (205 aa).

The protein belongs to the HflD family.

Its subcellular location is the cytoplasm. The protein resides in the cell inner membrane. In Haemophilus influenzae (strain PittEE), this protein is High frequency lysogenization protein HflD homolog.